Here is a 1174-residue protein sequence, read N- to C-terminus: Fanconi anemia group J protein homolog (1174 aa).

A Helicase ATP-binding domain is found at 11–445 (GGVKIHFPCR…KSHEPLRDVC (435 aa)). Residues 101–126 (NLDTSPHFNSPSKPSSGRNGVSTPCQ) show a composition bias toward polar residues. 2 disordered regions span residues 101 to 160 (NLDT…EKKR) and 187 to 208 (LASE…DRKD). Low complexity predominate over residues 134–143 (LAAKLSAKKQ). A Nuclear localization signal motif is present at residues 158–175 (KKRIRPLETTQQIRKRHC). An ATP-binding site is contributed by 185 to 192 (ARLASEKR). Cys286, Cys301, Cys313, and Cys353 together coordinate [4Fe-4S] cluster. The short motif at 393–396 (VILD) is the DEAH box element. The interaction with BRCA1 stretch occupies residues 888–1063 (SRRHQKVTNR…SNETADTSLG (176 aa)). Composition is skewed to polar residues over residues 923–935 (TSVS…SPEN) and 990–1001 (SRSSSPTFGKQT). 2 disordered regions span residues 923–1001 (TSVS…GKQT) and 1102–1155 (LSPG…SSHS). Residues Ser929, Ser932, and Ser994 each carry the phosphoserine modification. Over residues 1138–1147 (DTNEENGELV) the composition is skewed to acidic residues. Lys1174 carries the post-translational modification N6-acetyllysine.

The protein belongs to the DEAD box helicase family. DEAH subfamily. Binds directly to the BRCT domains of BRCA1. Interacts with the CIA complex components CIAO1, CIAO2B and MMS19. The cofactor is [4Fe-4S] cluster. In terms of processing, phosphorylated. Phosphorylation is necessary for interaction with BRCA1, and is cell-cycle regulated.

It is found in the nucleus. Its subcellular location is the cytoplasm. It catalyses the reaction Couples ATP hydrolysis with the unwinding of duplex DNA at the replication fork by translocating in the 5'-3' direction. This creates two antiparallel DNA single strands (ssDNA). The leading ssDNA polymer is the template for DNA polymerase III holoenzyme which synthesizes a continuous strand.. The catalysed reaction is ATP + H2O = ADP + phosphate + H(+). Functionally, DNA-dependent helicase and 5' to 3' DNA helicase required for the maintenance of chromosomal stability. Acts late in the Fanconi anemia pathway, after FANCD2 ubiquitination. Involved in the repair of DNA double-strand breaks by homologous recombination in a manner that depends on its association with BRCA1. Involved in the repair of abasic sites at replication forks by promoting the degradation of DNA-protein cross-links: acts by catalyzing unfolding of HMCES DNA-protein cross-link via its helicase activity, exposing the underlying DNA and enabling cleavage of the DNA-protein adduct by the SPRTN metalloprotease. Can unwind RNA:DNA hybrids and G-quadruplex DNA. The sequence is that of Fanconi anemia group J protein homolog from Mus musculus (Mouse).